We begin with the raw amino-acid sequence, 493 residues long: Dipeptide permease D (493 aa).

Topologically, residues 1–13 are cytoplasmic; sequence MNKHASQPRAIYY. A helical membrane pass occupies residues 14–34; that stretch reads VVALQIWEYFSFYGMRALLIL. The Periplasmic segment spans residues 35 to 48; it reads YLTNQLKYNDTHAY. The helical transmembrane segment at 49-69 threads the bilayer; it reads ELFSAYCSLVYVTPILGGFLA. At 70–77 the chain is on the cytoplasmic side; the sequence is DKVLGNRM. The helical transmembrane segment at 78–98 threads the bilayer; it reads AVMLGALLMAIGHVVLGASEI. Topologically, residues 99–100 are periplasmic; the sequence is HP. The chain crosses the membrane as a helical span at residues 101 to 121; sequence SFLYLSLAIIVCGYGLFKSNV. Topologically, residues 122-137 are cytoplasmic; sequence SCLLGELYEPTDPRRD. The helical transmembrane segment at 138–158 threads the bilayer; it reads GGFSLMYAAGNVGSIIAPIAC. Over 159–166 the chain is Periplasmic; sequence GYAQEEYS. Residues 167-187 traverse the membrane as a helical segment; sequence WAMGFGLAAVGMIAGLVIFLC. Over 188-211 the chain is Cytoplasmic; it reads GNRHFTHTRGVNKKVLRATNFLLP. A helical transmembrane segment spans residues 212–232; sequence NWGWLLVLLVATPALITVLFW. Residues 233–234 are Periplasmic-facing; that stretch reads KE. Residues 235 to 255 traverse the membrane as a helical segment; it reads WSVYALIVATIIGLGVLAKIY. At 256-268 the chain is on the cytoplasmic side; the sequence is RKAENQKQRKELR. Residues 269-289 traverse the membrane as a helical segment; that stretch reads LIVTLTFFSMLFWAFAQQGGS. At 290–311 the chain is on the periplasmic side; it reads SISLYIDRFVNRDMFGYTVPTA. Residues 312–332 form a helical membrane-spanning segment; the sequence is MFQSINAFAVMLCGVFLAWVV. At 333 to 343 the chain is on the cytoplasmic side; sequence KESVAGNRTVR. Residues 344–364 form a helical membrane-spanning segment; sequence IWGKFALGLGLMSAGFCILTL. The Periplasmic segment spans residues 365 to 378; sequence SARWSAMYGHSSLP. Residues 379-399 form a helical membrane-spanning segment; that stretch reads LMVLGLAVMGFAELFIDPVAM. The Cytoplasmic portion of the chain corresponds to 400–412; the sequence is SQITRIEIPGVTG. The chain crosses the membrane as a helical span at residues 413-433; the sequence is VLTGIYMLLSGAIANYLAGVI. Over 434-461 the chain is Periplasmic; that stretch reads ADQTSQASFDASGAINYSINAYIEVFDQ. Residues 462–482 form a helical membrane-spanning segment; that stretch reads ITWGALACVGVVLMIWLYQAL. Topologically, residues 483–493 are cytoplasmic; sequence KFRNRALALES.

This sequence belongs to the major facilitator superfamily. Proton-dependent oligopeptide transporter (POT/PTR) (TC 2.A.17) family. DtpD subfamily. In terms of assembly, monomer in solution. Exhibits a doughnut-like shape with a central, shallow depression and has a diameter of 8 nm.

Its subcellular location is the cell inner membrane. In terms of biological role, probable proton-dependent permease that transports dipeptides. This Escherichia coli O157:H7 protein is Dipeptide permease D (dtpD).